A 157-amino-acid polypeptide reads, in one-letter code: Ribosomal RNA large subunit methyltransferase H (157 aa).

S-adenosyl-L-methionine is bound by residues Leu-73, Gly-105, and 124–129 (LSKMTF).

It belongs to the RNA methyltransferase RlmH family. Homodimer.

It localises to the cytoplasm. The enzyme catalyses pseudouridine(1915) in 23S rRNA + S-adenosyl-L-methionine = N(3)-methylpseudouridine(1915) in 23S rRNA + S-adenosyl-L-homocysteine + H(+). Its function is as follows. Specifically methylates the pseudouridine at position 1915 (m3Psi1915) in 23S rRNA. This chain is Ribosomal RNA large subunit methyltransferase H, found in Christiangramia forsetii (strain DSM 17595 / CGMCC 1.15422 / KT0803) (Gramella forsetii).